Reading from the N-terminus, the 323-residue chain is GTP 3',8-cyclase (323 aa).

Residues 4-228 enclose the Radical SAM core domain; that stretch reads KYGRSIDYLR…VPVNIQNNGP (225 aa). R13 contacts GTP. Positions 20 and 24 each coordinate [4Fe-4S] cluster. Position 26 (Y26) interacts with S-adenosyl-L-methionine. C27 serves as a coordination point for [4Fe-4S] cluster. R63 is a GTP binding site. Residue G67 coordinates S-adenosyl-L-methionine. Residue T94 coordinates GTP. S118 provides a ligand contact to S-adenosyl-L-methionine. K155 serves as a coordination point for GTP. M189 lines the S-adenosyl-L-methionine pocket. C252 and C255 together coordinate [4Fe-4S] cluster. 257–259 is a GTP binding site; the sequence is RMR. C269 lines the [4Fe-4S] cluster pocket.

This sequence belongs to the radical SAM superfamily. MoaA family. In terms of assembly, monomer and homodimer. Requires [4Fe-4S] cluster as cofactor.

The catalysed reaction is GTP + AH2 + S-adenosyl-L-methionine = (8S)-3',8-cyclo-7,8-dihydroguanosine 5'-triphosphate + 5'-deoxyadenosine + L-methionine + A + H(+). Its pathway is cofactor biosynthesis; molybdopterin biosynthesis. Functionally, catalyzes the cyclization of GTP to (8S)-3',8-cyclo-7,8-dihydroguanosine 5'-triphosphate. The protein is GTP 3',8-cyclase of Petrotoga mobilis (strain DSM 10674 / SJ95).